The following is a 223-amino-acid chain: SCMKAAPMKEVSIRGQGSLAYPGLQTQGNLETLSGPNDATRGLTSLADTFEHVIEELLDEQQVIQSSKENKDADLYSSRVMLSSQVPLEPPLLFLLEEYKNYLDAANMSMRVRRHSDPARRGELSVCDSTSEWVTAAEKKTAVDMSGATVTVLEKVPVPKGQLKQYFYETKCSSKGYAKEGCRGIDKRYWNSQCRTTQSYVRALTMDNKKRVGWRFIRIDTSC.

The first 5 residues, 1 to 5 (SCMKA), serve as a signal peptide directing secretion. The propeptide occupies 6 to 114 (APMKEVSIRG…AANMSMRVRR (109 aa)). Residue Asn107 is glycosylated (N-linked (GlcNAc...) asparagine). Intrachain disulfides connect Cys127/Cys194 and Cys172/Cys223.

It belongs to the NGF-beta family.

The protein localises to the secreted. In terms of biological role, promotes the survival of neuronal populations that are all located either in the central nervous system or directly connected to it. The protein is Neurotrophic factor BDNF precursor form (BDNF) of Aspidites melanocephalus (Black-headed python).